Here is a 388-residue protein sequence, read N- to C-terminus: Beta-1,4-galactosyltransferase 5 (388 aa).

Residues 1–14 lie on the Cytoplasmic side of the membrane; the sequence is MRARRGLLRLPRRS. A helical; Signal-anchor for type II membrane protein membrane pass occupies residues 15–35; sequence LLAALFFFSLSSSLLYFVYVA. The Lumenal segment spans residues 36–388; it reads PGIVNTYLFM…TPELAQVNEY (353 aa). 5 N-linked (GlcNAc...) asparagine glycosylation sites follow: Asn-77, Asn-81, Asn-90, Asn-111, and Asn-128. A disulfide bond links Cys-114 and Cys-158. Residues 169–173, 208–210, 235–236, Tyr-264, and Trp-296 contribute to the UDP-alpha-D-galactose site; these read PFRNR, FNR, and VD. Cysteines 229 and 248 form a disulfide. Asp-236 contributes to the Mn(2+) binding site. 298–301 is a binding site for N-acetyl-D-glucosamine; sequence GEDD. His-329 lines the Mn(2+) pocket. Residue 329-330 participates in UDP-alpha-D-galactose binding; that stretch reads HH. Arg-340 serves as a coordination point for N-acetyl-D-glucosamine. 2 N-linked (GlcNAc...) asparagine glycosylation sites follow: Asn-364 and Asn-373.

Belongs to the glycosyltransferase 7 family. It depends on Mn(2+) as a cofactor. In terms of tissue distribution, ubiquitously expressed.

It localises to the golgi apparatus. It is found in the golgi stack membrane. It catalyses the reaction a beta-D-glucosyl-(1&lt;-&gt;1')-N-acylsphing-4-enine + UDP-alpha-D-galactose = a beta-D-Gal-(1-&gt;4)-beta-D-Glc-(1&lt;-&gt;1)-Cer(d18:1(4E)) + UDP + H(+). Its pathway is protein modification; protein glycosylation. It functions in the pathway sphingolipid metabolism. Its function is as follows. Catalyzes the synthesis of lactosylceramide (LacCer) via the transfer of galactose from UDP-galactose to glucosylceramide (GlcCer). LacCer is the starting point in the biosynthesis of all gangliosides (membrane-bound glycosphingolipids) which play pivotal roles in the CNS including neuronal maturation and axonal and myelin formation. Plays a role in the glycosylation of BMPR1A and regulation of its protein stability. Essential for extraembryonic development during early embryogenesis. This Homo sapiens (Human) protein is Beta-1,4-galactosyltransferase 5.